Consider the following 1023-residue polypeptide: MTENNYGIRDIKNQHLKYSYKKYTDLIIGFEKHAKRMYDDWVIDINNRNIIMHKLDNLVRSMIKIYNECIMEIYNKTPNENESDNISNTNKKINNAIYNKIYNEINKIERIENKNNKLVDSFNSIREQLIELAKNNGFHTINDFIGLYVGENYESLFNNLDMETFELYKGVFVPLSISINKIKKKYRDTDKQDTITISKIPSKCDGLIENTCTVTITMNNIFTEIIFEGYVSADILNAYLRTSQIYSKHLFNVKNESKRIVKESYPHVDEYFIAKYAKLINSNVYFINNPDEMATKIDSDYMLFTDLTAKNFNTIVKEFVNSNLPTMFSYINVLLMGSNQDVNNAGLLFNLLKDRKIGSETLSDIIYHNLSFHLQIKLKKIINSIKNELGKIRSLTPEEIPIEKKLASMVNMPENVKNYIIEKNNEIKTGENNYKLQMAINGLMQFPWKPKDFNNNNYFQIKNSVTKSRNYLQNVAKKLNETVFGHENSKKVLIELVGKWIQNPESSGQVIGLVGPPGVGKTLLAKGISAALGIPLSIVGLGGMSDSADLIGHSFTYAGAQYGMIVRQMIKAGNWRSVMFFDEVDKVSKRNDTNEIYNTLIHITDPNMNQNFQDRFYSSAIDFDLSGVLIVFSYNSSEKLDPILLDRIKEIKISPYSLKEKILIAQNHVIKELCSNIGFDRDKINIGDDIVEYIIEKYTMEAGVRELKRKLEQILLKVNIDRFYMRGPFYNLLKKYNPETQSDDNSHSLEENQINMYVDYKPSLLEKNSDPNIINKIFNLDIDDHIIITKELVHKYLDKPTLTTEEIHKTNMIGVINGLYATSVGMGGIVPIQIYKNFVGDKNDGSNLKLKITGNQKQVMRESVMCALTTAVNVLNNSIKSKILDKFPHGFHVHAPDGGTPKDGPSAGCAFTTAFVSAILGKKINRHVAMTGEIELTGKISKIGGLMLTTGAKKAGIKCVYICEDNKEDYEIIKKKSPELFQDGLEIKIVNHIIEIITDPNVIIDIDVNDFDKDLISEFKKLK.

An ATP-binding site is contributed by 515–522 (GPPGVGKT). Residues 810 to 1003 (TNMIGVINGL…IEIITDPNVI (194 aa)) enclose the Lon proteolytic domain. Residue S906 is part of the active site.

The protein belongs to the peptidase S16 family.

The polypeptide is Lon protease homolog (Acanthamoeba polyphaga (Amoeba)).